We begin with the raw amino-acid sequence, 207 residues long: Ras-related protein Rab-8A (207 aa).

Residues Ser-17, Gly-18, Val-19, Gly-20, Lys-21, Thr-22, Cys-23, Ser-35, Ser-39, and Thr-40 each coordinate GTP. Thr-22 is a Mg(2+) binding site. Short sequence motifs (switch) lie at residues 31-45 and 63-80; these read DAFN…GIDF and DTAG…YYRG. Residues Thr-40 and Asp-63 each coordinate Mg(2+). Gly-66 contributes to the GTP binding site. Thr-72 is subject to Phosphothreonine; by LRRK2. Residues Asn-121, Lys-122, Asp-124, Ala-152, and Lys-153 each contribute to the GTP site. Phosphoserine occurs at positions 181 and 185. Cysteine methyl ester is present on Cys-204. Cys-204 carries the S-geranylgeranyl cysteine lipid modification. A propeptide spans 205–207 (removed in mature form); that stretch reads SLL.

This sequence belongs to the small GTPase superfamily. Rab family. In terms of assembly, interacts (GTP-bound form) with MICALL1; regulates RAB8A association with recycling endosomes. Interacts with MICALL2; competes with RAB13 and is involved in E-cadherin endocytic recycling. Interacts (GTP-bound form) with MICAL1, MICALCL, MICAL3 and EHBP1L1; two molecules of RAB8A can bind to one molecule of the effector protein; ternary complexes of RAB8A, RAB13 and either MICAL1 or EHBP1L1 are possible. Interacts (GTP-bound form) with EHBP1. Interacts with EHD1. Interacts with MAP4K2 and SYTL4. Interacts with SGSM1 and SGSM3. Interacts with RABIF, RIMS2, RPH3A and RPH3A. Interacts with OPTN. Interacts with MYO5B. Interacts with CIMAP3. Interacts with BIRC6/bruce. Interacts with OCRL. Interacts with AHI1. Interacts with DCDC1. Interacts with LRRK2; interaction facilitates phosphorylation of Thr-72. Interacts with RAB31P, GDI1, GDI2, CHM, CHML, RABGGTA, RABGGTB, TBC1D15 and INPP5B; these interactions are dependent on Thr-72 not being phosphorylated. Interacts with RILPL1 and RILPL2; these interactions are dependent on the phosphorylation of Thr-72 by LRRK2. Interacts with DZIP1; prevents inhibition by the GDP-dissociation inhibitor GDI2. Interacts with RAB3IP/Rabin8, RAB3IP functions as guanine exchange factor (GEF) towards RAB8A. Interacts (in GDP-bound form) with RPGR, RPGR functions as GEF towards RAB8A. Requires Mg(2+) as cofactor. Phosphorylation of Thr-72 in the switch II region by LRRK2 prevents the association of RAB regulatory proteins, including CHM, CHML and RAB GDP dissociation inhibitors GDI1 and GDI2. Phosphorylation by LRRK2 is required for localization to stressed lysosomes.

Its subcellular location is the cell membrane. The protein resides in the golgi apparatus. It localises to the endosome membrane. It is found in the recycling endosome membrane. The protein localises to the cell projection. Its subcellular location is the cilium. The protein resides in the cytoplasmic vesicle. It localises to the phagosome membrane. It is found in the cytoplasm. The protein localises to the cytoskeleton. Its subcellular location is the microtubule organizing center. The protein resides in the centrosome. It localises to the centriole. It is found in the cilium basal body. The protein localises to the midbody. Its subcellular location is the lysosome. It carries out the reaction GTP + H2O = GDP + phosphate + H(+). With respect to regulation, regulated by guanine nucleotide exchange factors (GEFs) such as RAB3IP/Rabin8 and RPGR which promote the exchange of bound GDP for free GTP, GTPase activating proteins (GAPs) which increase the GTP hydrolysis activity, and GDP dissociation inhibitors (GDIs) which inhibit the dissociation of the nucleotide from the GTPase. Activated in response to insulin. Functionally, the small GTPases Rab are key regulators of intracellular membrane trafficking, from the formation of transport vesicles to their fusion with membranes. Rabs cycle between an inactive GDP-bound form and an active GTP-bound form that is able to recruit to membranes different sets of downstream effectors directly responsible for vesicle formation, movement, tethering and fusion. RAB8A is involved in polarized vesicular trafficking and neurotransmitter release. Together with RAB11A, RAB3IP, the exocyst complex, PARD3, PRKCI, ANXA2, CDC42 and DNMBP promotes transcytosis of PODXL to the apical membrane initiation sites (AMIS), apical surface formation and lumenogenesis. Regulates the compacted morphology of the Golgi. Together with MYO5B and RAB11A participates in epithelial cell polarization. Also involved in membrane trafficking to the cilium and ciliogenesis. Together with MICALL2, may also regulate adherens junction assembly. May play a role in insulin-induced transport to the plasma membrane of the glucose transporter GLUT4 and therefore play a role in glucose homeostasis. Involved in autophagy. Participates in the export of a subset of neosynthesized proteins through a Rab8-Rab10-Rab11-dependent endososomal export route. Targeted to and stabilized on stressed lysosomes through LRRK2 phosphorylation. Suppresses stress-induced lysosomal enlargement through EHBP1 and EHNP1L1 effector proteins. In Mus musculus (Mouse), this protein is Ras-related protein Rab-8A.